Reading from the N-terminus, the 77-residue chain is Large ribosomal subunit protein bL28 (77 aa).

Positions 1 to 25 (MARVCQVTGKAPMSGNNVSHANNKT) are disordered.

The protein belongs to the bacterial ribosomal protein bL28 family.

The protein is Large ribosomal subunit protein bL28 of Paraburkholderia phytofirmans (strain DSM 17436 / LMG 22146 / PsJN) (Burkholderia phytofirmans).